A 280-amino-acid chain; its full sequence is Extracellular metalloprotease GLRG_06286 (280 aa).

The first 17 residues, 1–17, serve as a signal peptide directing secretion; it reads MQVTFTLVAALAGMASA. Residue Asn-51 is glycosylated (N-linked (GlcNAc...) asparagine). Zn(2+) is bound at residue His-196. Glu-197 is an active-site residue. Position 200 (His-200) interacts with Zn(2+). The disordered stretch occupies residues 217-236; it reads DSIADTPAQSSPSSGCPVGR. A disulfide bridge connects residues Cys-232 and Cys-259.

Belongs to the peptidase M43B family.

It localises to the secreted. Secreted metalloproteinase that allows assimilation of proteinaceous substrates. This Colletotrichum graminicola (strain M1.001 / M2 / FGSC 10212) (Maize anthracnose fungus) protein is Extracellular metalloprotease GLRG_06286.